The following is a 160-amino-acid chain: Urease accessory protein UreE (160 aa).

This sequence belongs to the UreE family.

Its subcellular location is the cytoplasm. In terms of biological role, involved in urease metallocenter assembly. Binds nickel. Probably functions as a nickel donor during metallocenter assembly. This chain is Urease accessory protein UreE, found in Acinetobacter baumannii (strain ACICU).